Reading from the N-terminus, the 735-residue chain is Urea active transporter (735 aa).

The Cytoplasmic segment spans residues 1–14 (MGEFKPPLPQGAGY). A helical transmembrane segment spans residues 15–35 (AIVLGLGAVFAGMMVLTTYLL). Topologically, residues 36–85 (KRYQKEIITAEEFTTAGRSVKTGLVAAAVVSSWIWCSTLLTSSTKEYADG) are extracellular. Residues 86–106 (IFGGYAYAAGACFQIIAFAIL) form a helical membrane-spanning segment. Residues 107–130 (AIKTKQMAPNAHTYLELVRTRYGK) are Cytoplasmic-facing. A helical membrane pass occupies residues 131–151 (IGHGCYLFYAIATNILVTSML). Residues 152–166 (LTSGSAVFSDLTGMN) are Extracellular-facing. The chain crosses the membrane as a helical span at residues 167 to 187 (TIASCFLLPVGVVVYTLFGGI). The Cytoplasmic segment spans residues 188-189 (KA). A helical membrane pass occupies residues 190–210 (TFLTDYMHTCVIIIIVLVFAF). Residues 211-253 (KVYATSDVLGSPGKVYDLVREAAKRHPVDGNYQGEYMTMTSKS) lie on the Extracellular side of the membrane. The chain crosses the membrane as a helical span at residues 254-274 (AGILLIINLIGNFGTVFLDNG). Residues 275–295 (YWNKAISASPAASLKAYAIGG) are Cytoplasmic-facing. The chain crosses the membrane as a helical span at residues 296–316 (LAWFAVPSLISLTMGLACLAV). The Extracellular portion of the chain corresponds to 317-343 (ETSPNFPTYPDPLTSFQANSGLVLPAA). The helical transmembrane segment at 344-364 (AIAIMGKGGAVASLLMIFMAV) threads the bilayer. Residues 365-403 (TSAMSAELIAVSSVFTYDIYREYIDPRASGKKLIYTSHV) are Cytoplasmic-facing. Residues 404–424 (ACIFFGLAMSGFSVGLYYGGI) form a helical membrane-spanning segment. A topological domain (extracellular) is located at residue serine 425. The chain crosses the membrane as a helical span at residues 426–446 (MGYIYEMMGIIISSAVLPVVL). The Cytoplasmic portion of the chain corresponds to 447-454 (TLCSKDMN). A helical membrane pass occupies residues 455 to 475 (LVAAVVSPILGTGLAIMSWLV). At 476–496 (CTKSLYKELTVDTTFMDYPML) the chain is on the extracellular side. The helical transmembrane segment at 497–517 (TGNLVALLSPAIFIPILTYVF) threads the bilayer. Topologically, residues 518-618 (KPQNFDWEKM…EQRELARGLK (101 aa)) are cytoplasmic. Residues 553-572 (ANDKEQEEETNSLVSDSEKN) form a disordered region. Residues 619–639 (IAYFLCVFFALAFLVVWPMPM) traverse the membrane as a helical segment. Over 640 to 650 (YGSKYIFSKKF) the chain is Extracellular. Residues 651–671 (FTGWVVVMIIWLFFSAFAVCI) form a helical membrane-spanning segment. The Cytoplasmic segment spans residues 672-735 (YPLWEGRHGI…SHFGQVDEII (64 aa)).

This sequence belongs to the sodium:solute symporter (SSF) (TC 2.A.21) family. May polymerize.

The protein resides in the membrane. Required for active transport of urea. The polypeptide is Urea active transporter (DUR3) (Saccharomyces cerevisiae (strain ATCC 204508 / S288c) (Baker's yeast)).